The primary structure comprises 229 residues: Apoptosis regulator Bcl-2 (229 aa).

The short motif at 10 to 30 is the BH4 element; sequence DNREIVMKYIHYKLSQRGYEW. Positions 30–82 are disordered; that stretch reads WDAGDAGAAPPGAAPAPGILSSQPGRTPAPSRTSPPPPPAAAAGPAPSPVPPV. Over residues 33-61 the composition is skewed to low complexity; sequence GDAGAAPPGAAPAPGILSSQPGRTPAPSR. Position 62 is a phosphothreonine; by MAPK8 (threonine 62). The span at 62-81 shows a compositional bias: pro residues; that stretch reads TSPPPPPAAAAGPAPSPVPP. At serine 63 the chain carries Phosphoserine; by MAPK8 and PKC. Phosphoserine; by MAPK8 is present on serine 77. A BH3 motif is present at residues 83-97; that stretch reads VHLTLRQAGDDFSRR. The BH1 motif lies at 126 to 145; the sequence is ELFRDGVNWGRIVAFFEFGG. Residues 177-192 carry the BH2 motif; it reads TWIQDNGGWDAFVELY. A helical transmembrane segment spans residues 202–223; that stretch reads FSWLSLKALLSLALVGACITLG.

Belongs to the Bcl-2 family. Forms homodimers, and heterodimers with BAX, BAD, BAK and Bcl-X(L). Heterodimerization with BAX requires intact BH1 and BH2 motifs, and is necessary for anti-apoptotic activity. Component of the complex, at least composed of LRPPRC, BECN1 and BCL2; the interactions prevent BECN1 from forming an autophagy-inducing complex with PIK3C3. Interacts with EI24. Also interacts with APAF1, BBC3, BCL2L1, BNIPL, MRPL41 and TP53BP2. Binding to FKBP8 seems to target BCL2 to the mitochondria and probably interferes with the binding of BCL2 to its targets. Interacts with BAG1 in an ATP-dependent manner. Interacts with RAF1 (the 'Ser-338' and 'Ser-339' phosphorylated form). Interacts (via the BH4 domain) with EGLN3; the interaction prevents the formation of the BAX-BCL2 complex and inhibits the anti-apoptotic activity of BCL2. Interacts with G0S2; this interaction also prevents the formation of the anti-apoptotic BAX-BCL2 complex. Interacts with RTL10/BOP. Interacts with the SCF(FBXO10) complex. Interacts (via the loop between motifs BH4 and BH3) with NLRP1 (via LRR repeats), but not with NLRP2, NLRP3, NLRP4, PYCARD, nor MEFV. Interacts with GIMAP3/IAN4, GIMAP4/IAN1 and GIMAP5/IAN5. Interacts with BCAP31. Interacts with IRF3; the interaction is inhibited by Sendai virus infection. Interacts with BECN1; thereby inhibiting autophagy in non-starvation conditions. Interacts with AMBRA1; thereby inhibiting autophagy. In terms of processing, phosphorylation/dephosphorylation on Ser-63 regulates anti-apoptotic activity. Growth factor-stimulated phosphorylation on Ser-63 by PKC is required for the anti-apoptosis activity and occurs during the G2/M phase of the cell cycle. In the absence of growth factors, BCL2 appears to be phosphorylated by other protein kinases such as ERKs and stress-activated kinases. Phosphorylated by MAPK8/JNK1 at Thr-62, Ser-63 and Ser-77, which stimulates starvation-induced autophagy. Dephosphorylated by protein phosphatase 2A (PP2A). Post-translationally, proteolytically cleaved by caspases during apoptosis. The cleaved protein, lacking the BH4 motif, has pro-apoptotic activity, causes the release of cytochrome c into the cytosol promoting further caspase activity. Monoubiquitinated by PRKN, leading to an increase in its stability. Ubiquitinated by SCF(FBXO10), leading to its degradation by the proteasome.

It localises to the mitochondrion outer membrane. The protein localises to the nucleus membrane. It is found in the endoplasmic reticulum membrane. Its subcellular location is the cytoplasm. Its function is as follows. Suppresses apoptosis in a variety of cell systems including factor-dependent lymphohematopoietic and neural cells. Regulates cell death by controlling the mitochondrial membrane permeability. Appears to function in a feedback loop system with caspases. Inhibits caspase activity either by preventing the release of cytochrome c from the mitochondria and/or by binding to the apoptosis-activating factor (APAF-1). Also acts as an inhibitor of autophagy: interacts with BECN1 and AMBRA1 during non-starvation conditions and inhibits their autophagy function. May attenuate inflammation by impairing NLRP1-inflammasome activation, hence CASP1 activation and IL1B release. In Bos taurus (Bovine), this protein is Apoptosis regulator Bcl-2 (BCL2).